Here is a 128-residue protein sequence, read N- to C-terminus: Glycine cleavage system H protein (128 aa).

One can recognise a Lipoyl-binding domain in the interval 25-107; that stretch reads TITVGITHHA…YGAGWFFKLK (83 aa). K66 carries the post-translational modification N6-lipoyllysine.

The protein belongs to the GcvH family. As to quaternary structure, the glycine cleavage system is composed of four proteins: P, T, L and H. The cofactor is (R)-lipoate.

In terms of biological role, the glycine cleavage system catalyzes the degradation of glycine. The H protein shuttles the methylamine group of glycine from the P protein to the T protein. This is Glycine cleavage system H protein from Neisseria meningitidis serogroup B (strain ATCC BAA-335 / MC58).